A 725-amino-acid chain; its full sequence is Beta-adducin (725 aa).

The interval 1-22 is disordered; that stretch reads MSEDTVPEAASPPPSQGQHYFD. Phosphoserine is present on residues S11 and S25. At T55 the chain carries Phosphothreonine. Phosphoserine is present on residues S60 and S344. Positions 425–444 are interaction with calmodulin; that stretch reads KQQKEKTRWLNTPNTYLRVN. The tract at residues 525–725 is disordered; sequence AEKSRSPSTE…KSKKKEKVES (201 aa). Residues S530 and S532 each carry the phosphoserine modification. T533 carries the post-translational modification Phosphothreonine. S535 carries the post-translational modification Phosphoserine. A Phosphothreonine modification is found at T561. Basic and acidic residues predominate over residues 566–588; it reads EEYKKEVERKKLEQEQEGEKDAA. S594, S598, S602, and S606 each carry phosphoserine. Residues 596 to 621 are compositionally biased toward polar residues; that stretch reads VKSTPASPVQSPTRAGTKSPAVSPSK. Residue T612 is modified to Phosphothreonine. A phosphoserine mark is found at S614, S618, and S620. 2 stretches are compositionally biased toward basic and acidic residues: residues 622 to 631 and 639 to 654; these read ASEDAKKTEV and EPEK…KEEE. T674 carries the post-translational modification Phosphothreonine. Residues S678, S685, S688, S692, S696, S698, S700, S702, and S712 each carry the phosphoserine modification. Low complexity predominate over residues 687–700; sequence TSGPLSPEGSPSKS. Residues 701–725 are compositionally biased toward basic residues; that stretch reads PSKKKKKFRTPSFLKKSKKKEKVES. The interval 703 to 720 is interaction with calmodulin; the sequence is KKKKKFRTPSFLKKSKKK.

It belongs to the aldolase class II family. Adducin subfamily. Heterodimer of an alpha and a beta subunit. Found in a complex with ADD2, DMTN and SLC2A1. Interacts with SLC2A1. Found in liver, kidney, spleen, heart and brain.

It localises to the cytoplasm. Its subcellular location is the cytoskeleton. The protein localises to the cell membrane. Membrane-cytoskeleton-associated protein that promotes the assembly of the spectrin-actin network. Binds to the erythrocyte membrane receptor SLC2A1/GLUT1 and may therefore provide a link between the spectrin cytoskeleton to the plasma membrane. Binds to calmodulin. Calmodulin binds preferentially to the beta subunit. This Rattus norvegicus (Rat) protein is Beta-adducin (Add2).